Here is a 416-residue protein sequence, read N- to C-terminus: Glutamyl-tRNA reductase (416 aa).

Substrate contacts are provided by residues 49-52 (TCNR), Ser105, 110-112 (EPQ), and Gln116. Cys50 functions as the Nucleophile in the catalytic mechanism. 185–190 (GAGETI) is a binding site for NADP(+).

It belongs to the glutamyl-tRNA reductase family. In terms of assembly, homodimer.

It carries out the reaction (S)-4-amino-5-oxopentanoate + tRNA(Glu) + NADP(+) = L-glutamyl-tRNA(Glu) + NADPH + H(+). The protein operates within porphyrin-containing compound metabolism; protoporphyrin-IX biosynthesis; 5-aminolevulinate from L-glutamyl-tRNA(Glu): step 1/2. Catalyzes the NADPH-dependent reduction of glutamyl-tRNA(Glu) to glutamate 1-semialdehyde (GSA). The protein is Glutamyl-tRNA reductase of Shewanella putrefaciens (strain CN-32 / ATCC BAA-453).